A 411-amino-acid chain; its full sequence is Glycogen synthase kinase-3 homolog MsK-3 (411 aa).

The region spanning 74 to 358 (YMAERVVGHG…ALEALVHPFY (285 aa)) is the Protein kinase domain. ATP-binding positions include 80–88 (VGHGSFGVV) and lysine 103. The active-site Proton acceptor is aspartate 199. Tyrosine 234 carries the post-translational modification Phosphotyrosine.

It belongs to the protein kinase superfamily. CMGC Ser/Thr protein kinase family. GSK-3 subfamily. As to expression, absent in leaves and petioles, very low levels are seen in the stems and roots while a moderate expression is seen in the nodes.

The enzyme catalyses L-seryl-[protein] + ATP = O-phospho-L-seryl-[protein] + ADP + H(+). The catalysed reaction is L-threonyl-[protein] + ATP = O-phospho-L-threonyl-[protein] + ADP + H(+). This Medicago sativa (Alfalfa) protein is Glycogen synthase kinase-3 homolog MsK-3 (MSK-3).